Reading from the N-terminus, the 202-residue chain is MSGRSVRAETRSRAKDDIKKVMAAIEKVRKWEKKWVTVGDTSLRIFKWVPVTDSKEKEKSKSNSSAAREPNGFPSDASANSSLLLEFQDENSNQSSVSDVYQLKVDSSTNSSPSPQQSESLSPAHTSDFRTDDSQPPTLGQEILEEPSLPASEVADEPPTLTKEEPVPLETQIAEEEEDSSAPPLKRFCMDQPAVPQTASES.

The interval 53 to 202 is disordered; it reads DSKEKEKSKS…PAVPQTASES (150 aa). Polar residues predominate over residues 90-99; it reads ENSNQSSVSD. Positions 107-123 are enriched in low complexity; that stretch reads SSTNSSPSPQQSESLSP. Ser114, Ser118, Ser120, Ser122, Ser127, Ser148, and Ser152 each carry phosphoserine.

This sequence belongs to the BCL7 family.

Functionally, positive regulator of apoptosis. Plays a role in the Wnt signaling pathway, negatively regulating the expression of Wnt signaling components CTNNB1 and HMGA1. Involved in cell cycle progression, maintenance of the nuclear structure and stem cell differentiation. May play a role in lung tumor development or progression. The protein is B-cell CLL/lymphoma 7 protein family member B (BCL7B) of Bos taurus (Bovine).